We begin with the raw amino-acid sequence, 265 residues long: Glutamate racemase (265 aa).

Substrate contacts are provided by residues 9 to 10 (DS) and 41 to 42 (YS). The active-site Proton donor/acceptor is Cys-73. 74–75 (NT) contributes to the substrate binding site. The Proton donor/acceptor role is filled by Cys-184. 185-186 (TH) provides a ligand contact to substrate.

Belongs to the aspartate/glutamate racemases family.

It catalyses the reaction L-glutamate = D-glutamate. The protein operates within cell wall biogenesis; peptidoglycan biosynthesis. Its function is as follows. Provides the (R)-glutamate required for cell wall biosynthesis. This chain is Glutamate racemase, found in Actinobacillus pleuropneumoniae serotype 3 (strain JL03).